We begin with the raw amino-acid sequence, 239 residues long: Purine nucleoside phosphorylase DeoD-type (239 aa).

His5 provides a ligand contact to a purine D-ribonucleoside. Phosphate contacts are provided by residues Gly21, Arg25, Arg44, and 88–91 (RVGS). Residues 180 to 182 (EME) and 204 to 205 (SD) each bind a purine D-ribonucleoside. Asp205 serves as the catalytic Proton donor.

The protein belongs to the PNP/UDP phosphorylase family. Homohexamer; trimer of homodimers.

The catalysed reaction is a purine D-ribonucleoside + phosphate = a purine nucleobase + alpha-D-ribose 1-phosphate. The enzyme catalyses a purine 2'-deoxy-D-ribonucleoside + phosphate = a purine nucleobase + 2-deoxy-alpha-D-ribose 1-phosphate. Functionally, catalyzes the reversible phosphorolytic breakdown of the N-glycosidic bond in the beta-(deoxy)ribonucleoside molecules, with the formation of the corresponding free purine bases and pentose-1-phosphate. In Salmonella arizonae (strain ATCC BAA-731 / CDC346-86 / RSK2980), this protein is Purine nucleoside phosphorylase DeoD-type.